Reading from the N-terminus, the 1172-residue chain is Putative cadmium/zinc-transporting ATPase HMA4 (1172 aa).

Residues 1–93 (MALQNKEEEK…VRVNGETSFK (93 aa)) lie on the Cytoplasmic side of the membrane. The region spanning 17-83 (QKSYFDVLGI…ALNEARLEAN (67 aa)) is the HMA domain. Residues 94 to 115 (NKWPSPFAVVSGLLLLLSFLKF) traverse the membrane as a helical segment. The Extracellular segment spans residues 116–118 (VYS). Residues 119 to 138 (PLRWLAVAAVAAGIYPILAK) traverse the membrane as a helical segment. Over 139–145 (AFASIKR) the chain is Cytoplasmic. The helical transmembrane segment at 146-166 (PRIDINILVIITVIATLAMQD) threads the bilayer. Residue phenylalanine 167 is a topological domain, extracellular. A helical transmembrane segment spans residues 168–188 (MEAAAVVFLFTISDWLETRAS). Residues 189-314 (YKATSVMQSL…KTKSQRLIDK (126 aa)) lie on the Cytoplasmic side of the membrane. The chain crosses the membrane as a helical span at residues 315–337 (CSQYYTPAIILVSACVAIVPVIM). The Extracellular segment spans residues 338–345 (KVHNLKHW). A helical membrane pass occupies residues 346–363 (FHLALVVLVSGCPCGLIL). Residues 364–656 (STPVATFCAL…KLARRARRKV (293 aa)) are Cytoplasmic-facing. The 4-aspartylphosphate intermediate role is filled by aspartate 401. Mg(2+)-binding residues include aspartate 601 and aspartate 605. A helical transmembrane segment spans residues 657–676 (VENVCLSIILKAGILALAFA). At 677–680 (GHPL) the chain is on the extracellular side. A helical transmembrane segment spans residues 681-700 (IWAAVLVDVGTCLLVIFNSM). The Cytoplasmic segment spans residues 701–1172 (LLLREKKKIG…HHHHHHHVSA (472 aa)).

Belongs to the cation transport ATPase (P-type) (TC 3.A.3) family. Type IB subfamily.

The protein resides in the membrane. It carries out the reaction Zn(2+)(in) + ATP + H2O = Zn(2+)(out) + ADP + phosphate + H(+). It catalyses the reaction Cd(2+)(in) + ATP + H2O = Cd(2+)(out) + ADP + phosphate + H(+). Involved in cadmium/zinc transport. The polypeptide is Putative cadmium/zinc-transporting ATPase HMA4 (HMA4) (Arabidopsis thaliana (Mouse-ear cress)).